The chain runs to 89 residues: Large ribosomal subunit protein bL27 (89 aa).

The tract at residues 1–24 (MAHKKAGGSSRNGRDSAGRRLGVK) is disordered.

Belongs to the bacterial ribosomal protein bL27 family.

The chain is Large ribosomal subunit protein bL27 from Maricaulis maris (strain MCS10) (Caulobacter maris).